Here is a 431-residue protein sequence, read N- to C-terminus: Adenylosuccinate synthetase (431 aa).

GTP contacts are provided by residues Gly-13–Lys-19 and Gly-41–Thr-43. The active-site Proton acceptor is the Asp-14. Mg(2+)-binding residues include Asp-14 and Gly-41. IMP contacts are provided by residues Asp-14–Lys-17, Asn-39–His-42, Thr-130, Arg-144, Gln-225, Thr-240, and Arg-304. The Proton donor role is filled by His-42. Residue Ala-300–Arg-306 participates in substrate binding. GTP-binding positions include Arg-306, Lys-332–Asp-334, and Ser-414–Gly-416.

It belongs to the adenylosuccinate synthetase family. In terms of assembly, homodimer. Requires Mg(2+) as cofactor.

The protein resides in the cytoplasm. It carries out the reaction IMP + L-aspartate + GTP = N(6)-(1,2-dicarboxyethyl)-AMP + GDP + phosphate + 2 H(+). It functions in the pathway purine metabolism; AMP biosynthesis via de novo pathway; AMP from IMP: step 1/2. Functionally, plays an important role in the de novo pathway of purine nucleotide biosynthesis. Catalyzes the first committed step in the biosynthesis of AMP from IMP. The polypeptide is Adenylosuccinate synthetase (Chromohalobacter salexigens (strain ATCC BAA-138 / DSM 3043 / CIP 106854 / NCIMB 13768 / 1H11)).